The following is a 352-amino-acid chain: Methylthioribose-1-phosphate isomerase (352 aa).

Residues 49-51 (RGA), R93, and Q202 contribute to the substrate site. D243 functions as the Proton donor in the catalytic mechanism. Residue 253–254 (NK) participates in substrate binding.

This sequence belongs to the eIF-2B alpha/beta/delta subunits family. MtnA subfamily.

The enzyme catalyses 5-(methylsulfanyl)-alpha-D-ribose 1-phosphate = 5-(methylsulfanyl)-D-ribulose 1-phosphate. It participates in amino-acid biosynthesis; L-methionine biosynthesis via salvage pathway; L-methionine from S-methyl-5-thio-alpha-D-ribose 1-phosphate: step 1/6. Catalyzes the interconversion of methylthioribose-1-phosphate (MTR-1-P) into methylthioribulose-1-phosphate (MTRu-1-P). The chain is Methylthioribose-1-phosphate isomerase from Magnetococcus marinus (strain ATCC BAA-1437 / JCM 17883 / MC-1).